We begin with the raw amino-acid sequence, 495 residues long: ATP synthase subunit alpha, chloroplastic (495 aa).

An ATP-binding site is contributed by 170 to 177; sequence GDRQTGKT.

Belongs to the ATPase alpha/beta chains family. As to quaternary structure, F-type ATPases have 2 components, CF(1) - the catalytic core - and CF(0) - the membrane proton channel. CF(1) has five subunits: alpha(3), beta(3), gamma(1), delta(1), epsilon(1). CF(0) has four main subunits: a, b, b' and c.

The protein resides in the plastid. Its subcellular location is the chloroplast thylakoid membrane. The catalysed reaction is ATP + H2O + 4 H(+)(in) = ADP + phosphate + 5 H(+)(out). Produces ATP from ADP in the presence of a proton gradient across the membrane. The alpha chain is a regulatory subunit. This chain is ATP synthase subunit alpha, chloroplastic, found in Cyanidioschyzon merolae (strain NIES-3377 / 10D) (Unicellular red alga).